Reading from the N-terminus, the 429-residue chain is Enolase (429 aa).

Glutamine 162 provides a ligand contact to (2R)-2-phosphoglycerate. Residue glutamate 204 is the Proton donor of the active site. The Mg(2+) site is built by aspartate 241, glutamate 283, and aspartate 310. (2R)-2-phosphoglycerate contacts are provided by lysine 335, arginine 364, serine 365, and lysine 386. Lysine 335 serves as the catalytic Proton acceptor.

The protein belongs to the enolase family. Mg(2+) serves as cofactor.

It localises to the cytoplasm. It is found in the secreted. The protein resides in the cell surface. The catalysed reaction is (2R)-2-phosphoglycerate = phosphoenolpyruvate + H2O. It functions in the pathway carbohydrate degradation; glycolysis; pyruvate from D-glyceraldehyde 3-phosphate: step 4/5. In terms of biological role, catalyzes the reversible conversion of 2-phosphoglycerate (2-PG) into phosphoenolpyruvate (PEP). It is essential for the degradation of carbohydrates via glycolysis. The chain is Enolase from Mycobacterium sp. (strain JLS).